The chain runs to 208 residues: Large ribosomal subunit protein uL3 (208 aa).

Q149 is subject to N5-methylglutamine.

The protein belongs to the universal ribosomal protein uL3 family. In terms of assembly, part of the 50S ribosomal subunit. Forms a cluster with proteins L14 and L19. Methylated by PrmB.

In terms of biological role, one of the primary rRNA binding proteins, it binds directly near the 3'-end of the 23S rRNA, where it nucleates assembly of the 50S subunit. The polypeptide is Large ribosomal subunit protein uL3 (Glaesserella parasuis serovar 5 (strain SH0165) (Haemophilus parasuis)).